The sequence spans 2350 residues: MQGPYSLNGYRVRVYRQDSATQWFTGIITHHDLFTRTMIVMNDQVLEPQNVDPSMVQMTFLDDVVHSLLKGENIGITSRRRSRASQNISTVHGHYTRAQANSPRPAMNSQAAVPKQNTHQQQQQRSIRPNKRKGSDSSIPDEEKMKEDKYDCVSRGENPKGKNKHVVTKRRKPEEAEKRLSMKRLRTDNASDASESSDAESSSKRVTETSSSEPMPEYEPKNKVTSKVNGEEGQSQAAEEAGEETLIDTRPPWDQMQEDKNHNEGEKPKSTDSHLQDKMTLRSSEQATVADHNSNDSVLQECNVENQRTVELLPKDRLVSRTPTPKCVTDIKNDTHSERAAQENLNTFGLQTPENMDPNVSDSKHSNAKYLETAKQDCDQSWVSDVVKVDLTQSSVTNAPSGSDKRDTEKERNHYVSYMSSLSAVSVTEDQLHKRSPPPETIKAKLTTSVDTQKAKSSSSPEVVKPKITHSPDSVKSKAAYGNSQAVGERRLANKIEHELSRGSFHPVPTRGSALETTKSPLIIDKNEHFTVYRDPALIGSETGANHISPFLSQHPFSLHSSSHRTCLNPGTHHPALTPGPHLLAGSTSQTPLPTINTHPLTSGPHHPVHHPHLLPTVLPGVPTASLLGGHPRLESAHASSLSHLALAHQQQQQLLQHQSPHLLGQAHPSASYNQLGLYPIIWQYPNGTHAYSGLGLPSSKWVHPENAVNAEASLRRNSPSPWLHQPTPVTSADGIGLLSHIPVRPSSAEPHRPHKITVHSSPPLTKTLADHHKEELERKAFMEPLRSNASTSVKGDLDLNRSQAGKDCHLHRHFVGPRPPQETGERLNKYKEEHRRILQESIDVAPFTTKIKGHEVERENYSRVVPSSSSPKSHAIKQDKDVDRSVSEIYKMKHSVPQSLPQSNYFTTLSNSVVNEPPRSYPSKEVSNIYTEKQNNNLSATANPQTHSFISSLSKPPPLIKHQPESESLVGKIPDHLPHQSASHSVTTFRSDCRSPTHLTVSSTNALRSMPALHRAPVFHPPIHHSLERKESSYSSLSPPTLTPVMPVNAGGKVQESQKPPTLIPEPKDSQSNFKNSSDQSLTEMWRSNNNLNREKAEWPVEKSSGKSQAAVASVIVRPPSSTKVDSVPSVPLASKDRVCERSSSGANKTDYLKPEAGETGRIILPNVNLESAHVKSEKNFEAVSQGNVPVSVMSAVNVVSTTKADVFTSAATTTSVSSLSSAETSYSLSNTISASTPFECTSSKSVVSQAVAQAKDCTVSTAVPGTLACSKTGSAVQPGSGFSGTTDFIHLKKHKAALAAAQFKNSSVSEAELNTVRNQTVAASLPLDSTMTCTASNKAISVGNGPAAQSSQPNYHTKLKKAWLTRHSEEDKNTNKMENSGNSVSEIIKPCSVNLIASTSNDIENRADGRVAVDKYGRDEKVSRRKAKRTYESGSESGDSDESESKSEQRTKRQPKPTYKKKQNDLQKRKGEVEEDSKPNGVLSRSAKDKSKLKLQNSNSAGVPRSVLKDWRKVKKLKQTGESFLQDDSCCEIGPNLQKCRECRLIRSKKGEESTHSPVFCRFYYFRRLSFSKNGVVRIDGFSSPDQYDDEAMSLWTHENYEDDEVDVETSKYILDIIGDKFCQLVTSEKTALSWVKKDAKIAWKRAVRGVREMCDACEATLFNVHWVCRKCGFVACLDCYKAKERKSSRDKELYAWMKCVKGQPHDHKHLMLTQIIPGSVLTDLLDAMHILREKYGIKSHCHCTNRQNLQGGNVPTMNGVSQVLQNVLHHSNKTSVSLPESQQQNSPQKSQTNGNSSPGSASTDSRLTPPESQSPLHWLADLAEQKSREEKQENKEFTLEREIKEDGDQDASDSPNGSTSPPASQSNEQGSTLRDLLTTTAGKLRVGSTDAGIAFAPVYSMGTSSGKGGRTMPNILDDIIASVVENKIPPNKTSKINIKSEPNEEPKESSLPATDESNKSYRDIPHSWICDQHILWLKDYKNSNNWKLFKECWKQGQPAVVSGVHKKMNISLWKAESISLDFGDHQADLLNCKDSIVSNANVKEFWDGFEEVSKRQKNKGGETVVLKLKDCPSGEDFKAMMPTRYEDFLRCLPLPEYCNPEGKFNLASHLPGFFVRPDLGPRLCSAYGVAAAKDHDIGTTNLHIEASDVVNVLVYVGIAKGNGVLSKAGILKKFEEEELDDVLRKRLKDSSEIPGALWHIYAGKDVDKIREFLQKISKEQGLEVLPEHDPIRDQSWYVNRKLRQRLLEEYGVRACTLIQFLGDAIVLPAGTLHQVQNFHSCVQVTEDFVSPEHLVQSFHLTQELRLLKEEINYDDKLQVKNILYHAVKEMVRALKMHEDEVEDMEDT.

Disordered stretches follow at residues 96 to 302 and 314 to 336; these read TRAQ…LQEC and PKDR…NDTH. Positions 98–127 are enriched in polar residues; sequence AQANSPRPAMNSQAAVPKQNTHQQQQQRSI. 2 positions are modified to phosphoserine: Ser135 and Ser138. Basic and acidic residues predominate over residues 141-160; sequence DEEKMKEDKYDCVSRGENPK. The segment covering 161–171 has biased composition (basic residues); the sequence is GKNKHVVTKRR. A compositionally biased stretch (basic and acidic residues) spans 172–189; it reads KPEEAEKRLSMKRLRTDN. Residues 190–200 show a composition bias toward low complexity; the sequence is ASDASESSDAE. Residues Ser191 and Ser194 each carry the phosphoserine modification. A compositionally biased stretch (basic and acidic residues) spans 257–280; sequence QEDKNHNEGEKPKSTDSHLQDKMT. Polar residues predominate over residues 281–302; sequence LRSSEQATVADHNSNDSVLQEC. A phosphoserine mark is found at Ser294 and Ser320. At Thr324 the chain carries Phosphothreonine. A phosphoserine mark is found at Ser420, Ser436, Ser457, Ser458, Ser460, Ser471, and Ser762. Disordered regions lie at residues 426–486, 747–766, 859–883, 1030–1083, and 1422–1508; these read SVTE…NSQA, SSAE…PPLT, RENY…DKDV, RKES…DQSL, and EKVS…VPRS. Composition is skewed to low complexity over residues 863-874 and 1034-1045; these read SRVVPSSSSPKS and SYSSLSPPTLTP. Positions 1071 to 1083 are enriched in polar residues; that stretch reads SQSNFKNSSDQSL. The span at 1454–1463 shows a compositional bias: basic residues; it reads KRQPKPTYKK. A compositionally biased stretch (basic and acidic residues) spans 1464 to 1480; sequence KQNDLQKRKGEVEEDSK. A C6-type zinc finger spans residues 1657-1682; sequence CDACEATLFNVHWVCRKCGFVACLDC. Residues 1776 to 1818 are compositionally biased toward polar residues; that stretch reads KTSVSLPESQQQNSPQKSQTNGNSSPGSASTDSRLTPPESQSP. The segment at 1776–1874 is disordered; the sequence is KTSVSLPESQ…PASQSNEQGS (99 aa). Residue Ser1800 is modified to Phosphoserine. Basic and acidic residues predominate over residues 1826 to 1849; sequence AEQKSREEKQENKEFTLEREIKED. Over residues 1855–1874 the composition is skewed to polar residues; sequence SDSPNGSTSPPASQSNEQGS. The short motif at 1876–1880 is the LXXLL motif element; the sequence is LRDLL. Residues 1933-1962 are disordered; sequence PNKTSKINIKSEPNEEPKESSLPATDESNK. Lys1942 participates in a covalent cross-link: Glycyl lysine isopeptide (Lys-Gly) (interchain with G-Cter in SUMO2). In terms of domain architecture, JmjC spans 2084–2308; the sequence is MPTRYEDFLR…QSFHLTQELR (225 aa). Residues His2146, Glu2148, and His2276 each contribute to the Fe cation site.

This sequence belongs to the JHDM2 histone demethylase family. Fe(2+) is required as a cofactor.

The protein localises to the nucleus. Probable histone demethylase that specifically demethylates 'Lys-9' of histone H3, thereby playing a central role in histone code. Demethylation of Lys residue generates formaldehyde and succinate. May be involved in hormone-dependent transcriptional activation, by participating in recruitment to androgen-receptor target genes. The protein is Probable JmjC domain-containing histone demethylation protein 2C (Jmjd1c) of Mus musculus (Mouse).